The following is a 400-amino-acid chain: CCA-adding enzyme (400 aa).

The ATP site is built by Gly28 and Arg31. CTP contacts are provided by Gly28 and Arg31. Positions 41 and 43 each coordinate Mg(2+). ATP-binding residues include Arg112, Asp155, Arg158, Arg161, and Arg164. CTP-binding residues include Arg112, Asp155, Arg158, Arg161, and Arg164.

This sequence belongs to the tRNA nucleotidyltransferase/poly(A) polymerase family. Bacterial CCA-adding enzyme type 3 subfamily. In terms of assembly, homodimer. Mg(2+) serves as cofactor.

It carries out the reaction a tRNA precursor + 2 CTP + ATP = a tRNA with a 3' CCA end + 3 diphosphate. It catalyses the reaction a tRNA with a 3' CCA end + 2 CTP + ATP = a tRNA with a 3' CCACCA end + 3 diphosphate. Its function is as follows. Catalyzes the addition and repair of the essential 3'-terminal CCA sequence in tRNAs without using a nucleic acid template. Adds these three nucleotides in the order of C, C, and A to the tRNA nucleotide-73, using CTP and ATP as substrates and producing inorganic pyrophosphate. tRNA 3'-terminal CCA addition is required both for tRNA processing and repair. Also involved in tRNA surveillance by mediating tandem CCA addition to generate a CCACCA at the 3' terminus of unstable tRNAs. While stable tRNAs receive only 3'-terminal CCA, unstable tRNAs are marked with CCACCA and rapidly degraded. This Staphylococcus aureus (strain MRSA252) protein is CCA-adding enzyme.